A 419-amino-acid polypeptide reads, in one-letter code: L-2-hydroxyglutarate dehydrogenase, mitochondrial (419 aa).

Residues 1–51 constitute a mitochondrion transit peptide; it reads MVPALRYLVGACGRARGGFAGDFPGASGLASGRPRPLCGGSRSASTSSFDI. An N6-acetyllysine mark is found at K104 and K173.

This sequence belongs to the L2HGDH family. The cofactor is FAD.

Its subcellular location is the mitochondrion. The enzyme catalyses (S)-2-hydroxyglutarate + A = 2-oxoglutarate + AH2. This is L-2-hydroxyglutarate dehydrogenase, mitochondrial (L2HGDH) from Pongo abelii (Sumatran orangutan).